The primary structure comprises 291 residues: 3-hydroxy-5-phosphonooxypentane-2,4-dione thiolase (291 aa).

K203 serves as the catalytic Schiff-base intermediate with substrate.

Belongs to the DeoC/FbaB aldolase family. Homodecamer.

Its subcellular location is the cytoplasm. It carries out the reaction dihydroxyacetone phosphate + acetyl-CoA = 3-hydroxy-2,4-dioxopentyl phosphate + CoA. Functionally, involved in the degradation of phospho-AI-2, thereby terminating induction of the lsr operon and closing the AI-2 signaling cycle. Catalyzes the transfer of an acetyl moiety from 3-hydroxy-5-phosphonooxypentane-2,4-dione to CoA to form glycerone phosphate and acetyl-CoA. This chain is 3-hydroxy-5-phosphonooxypentane-2,4-dione thiolase, found in Salmonella typhimurium (strain LT2 / SGSC1412 / ATCC 700720).